The sequence spans 202 residues: ATP-dependent Clp protease proteolytic subunit (202 aa).

The Nucleophile role is filled by serine 101. Histidine 126 is an active-site residue.

The protein belongs to the peptidase S14 family. Component of the chloroplastic Clp protease core complex.

Its subcellular location is the plastid. The protein localises to the chloroplast stroma. The enzyme catalyses Hydrolysis of proteins to small peptides in the presence of ATP and magnesium. alpha-casein is the usual test substrate. In the absence of ATP, only oligopeptides shorter than five residues are hydrolyzed (such as succinyl-Leu-Tyr-|-NHMec, and Leu-Tyr-Leu-|-Tyr-Trp, in which cleavage of the -Tyr-|-Leu- and -Tyr-|-Trp bonds also occurs).. Functionally, cleaves peptides in various proteins in a process that requires ATP hydrolysis. Has a chymotrypsin-like activity. Plays a major role in the degradation of misfolded proteins. This chain is ATP-dependent Clp protease proteolytic subunit, found in Liriodendron tulipifera (Tuliptree).